A 316-amino-acid polypeptide reads, in one-letter code: uncharacterized protein (316 aa).

Residues 1-70 lie on the Cytoplasmic side of the membrane; sequence SFAYSGNSES…NNDEIGIWNY (70 aa). Residues 71 to 91 form a helical membrane-spanning segment; that stretch reads ISVAEMGGVLLFLSYWIWTCL. Residue His-92 is a topological domain, lumenal. The chain crosses the membrane as a helical span at residues 93 to 113; the sequence is FSKIIFPAQKVICLYIFLFAL. Residues 114–170 lie on the Cytoplasmic side of the membrane; that stretch reads NQTLQECIEEYVFSSECIKYRQFYSVYEIIDFLRTNFYRLFVIYCALGFGITRTVPK. A helical transmembrane segment spans residues 171–191; that stretch reads YLMIKGISIVIALCSVYWISL. Topologically, residues 192 to 194 are lumenal; it reads YKD. The chain crosses the membrane as a helical span at residues 195–215; it reads VYVVSEIFDMIQYEVSPAIWV. Over 216–245 the chain is Cytoplasmic; sequence YSICHLLKQCTSVTTYENASKARFFRRMLN. Residues 246–266 traverse the membrane as a helical segment; sequence AFIFIFCASPMLHYLSNIIFG. At 267-316 the chain is on the lumenal side; sequence NFDYRLSVIIGDLFTFMEKIAFPCYIMFPTHNEALAYNRNVAEEAQEKMI.

The protein belongs to the UPF0742 family.

The protein localises to the endoplasmic reticulum. Its subcellular location is the membrane. This is an uncharacterized protein from Schizosaccharomyces pombe (strain 972 / ATCC 24843) (Fission yeast).